A 126-amino-acid chain; its full sequence is Large ribosomal subunit protein uL22c (126 aa).

This sequence belongs to the universal ribosomal protein uL22 family. Part of the 50S ribosomal subunit.

It localises to the plastid. The protein localises to the chloroplast. Its function is as follows. This protein binds specifically to 23S rRNA. Functionally, the globular domain of the protein is located near the polypeptide exit tunnel on the outside of the subunit, while an extended beta-hairpin is found that lines the wall of the exit tunnel in the center of the 70S ribosome. In Cryptomeria japonica (Japanese cedar), this protein is Large ribosomal subunit protein uL22c (rpl22).